We begin with the raw amino-acid sequence, 219 residues long: Lipoprotein-releasing system ATP-binding protein LolD (219 aa).

An ABC transporter domain is found at 5–219; the sequence is LKAGDIFKTY…KVVMQDGVII (215 aa). 37-44 lines the ATP pocket; the sequence is GASGAGKS.

This sequence belongs to the ABC transporter superfamily. Lipoprotein translocase (TC 3.A.1.125) family. The complex is composed of two ATP-binding proteins (LolD) and two transmembrane proteins (LolC and LolE).

The protein localises to the cell inner membrane. Part of the ABC transporter complex LolCDE involved in the translocation of mature outer membrane-directed lipoproteins, from the inner membrane to the periplasmic chaperone, LolA. Responsible for the formation of the LolA-lipoprotein complex in an ATP-dependent manner. This is Lipoprotein-releasing system ATP-binding protein LolD from Cytophaga hutchinsonii (strain ATCC 33406 / DSM 1761 / CIP 103989 / NBRC 15051 / NCIMB 9469 / D465).